The chain runs to 588 residues: ustiloxin B cluster transcription factor ustR (588 aa).

A DNA-binding region (zn(2)-C6 fungal-type) is located at residues Cys11 to Cys38. The segment at Arg68–Asn92 is disordered.

The protein localises to the nucleus. In terms of biological role, transcription factor that regulates the expression of the gene cluster that mediates the biosynthesis of ustiloxin B, an antimitotic tetrapeptide. The chain is ustiloxin B cluster transcription factor ustR from Aspergillus flavus (strain ATCC 200026 / FGSC A1120 / IAM 13836 / NRRL 3357 / JCM 12722 / SRRC 167).